Here is a 514-residue protein sequence, read N- to C-terminus: Alanine--glyoxylate aminotransferase 2, mitochondrial (514 aa).

Residues 1-41 (MTLIWRHLLRPLCLVTSAPRILEMHPFLSLGTSRTSVTKLS) constitute a mitochondrion transit peptide. N6-acetyllysine; alternate is present on Lys71. An N6-succinyllysine; alternate modification is found at Lys71. Lys84 bears the N6-acetyllysine mark. At Lys262 the chain carries N6-acetyllysine; alternate. At Lys262 the chain carries N6-succinyllysine; alternate. N6-succinyllysine is present on Lys304. Lys350 carries the N6-(pyridoxal phosphate)lysine modification. Lys417 and Lys420 each carry N6-acetyllysine; alternate. Residues Lys417 and Lys420 each carry the N6-succinyllysine; alternate modification.

It belongs to the class-III pyridoxal-phosphate-dependent aminotransferase family. As to quaternary structure, homotetramer. The cofactor is pyridoxal 5'-phosphate. As to expression, expressed in the convoluted tubule in the kidney and in the liver hepatocytes (at protein level).

The protein localises to the mitochondrion. The enzyme catalyses glyoxylate + L-alanine = glycine + pyruvate. It catalyses the reaction (R)-3-amino-2-methylpropanoate + pyruvate = 2-methyl-3-oxopropanoate + L-alanine. It carries out the reaction 3-oxopropanoate + L-alanine = beta-alanine + pyruvate. The catalysed reaction is 2-oxobutanoate + L-alanine = (2S)-2-aminobutanoate + pyruvate. The enzyme catalyses N(omega),N(omega)-dimethyl-L-arginine + pyruvate = 5-(3,3-dimethylguanidino)-2-oxopentanoate + L-alanine. It catalyses the reaction N(omega),N('omega)-dimethyl-L-arginine + pyruvate = 5-(3,3'-dimethylguanidino)-2-oxopentanoate + L-alanine. It carries out the reaction N(omega),N(omega)-dimethyl-L-arginine + glyoxylate = 5-(3,3-dimethylguanidino)-2-oxopentanoate + glycine. The catalysed reaction is N(omega),N('omega)-dimethyl-L-arginine + glyoxylate = 5-(3,3'-dimethylguanidino)-2-oxopentanoate + glycine. The enzyme catalyses N(omega)-methyl-L-arginine + pyruvate = 5-(3-methylguanidino)-2-oxopentanoate + L-alanine. It catalyses the reaction N(omega)-methyl-L-arginine + glyoxylate = 5-(3-methylguanidino)-2-oxopentanoate + glycine. It carries out the reaction L-ornithine + pyruvate = 5-amino-2-oxopentanoate + L-alanine. The catalysed reaction is L-ornithine + glyoxylate = 5-amino-2-oxopentanoate + glycine. The enzyme catalyses (2S)-2-aminobutanoate + glyoxylate = 2-oxobutanoate + glycine. It catalyses the reaction N(omega),N(omega)-dimethyl-L-arginine + oxaloacetate = 5-(3,3-dimethylguanidino)-2-oxopentanoate + L-aspartate. It carries out the reaction oxaloacetate + L-alanine = L-aspartate + pyruvate. The catalysed reaction is N(omega),N(omega)-dimethyl-L-arginine + 2-oxobutanoate = 5-(3,3-dimethylguanidino)-2-oxopentanoate + (2S)-2-aminobutanoate. The enzyme catalyses 2-oxopentanoate + N(omega),N(omega)-dimethyl-L-arginine = 5-(3,3-dimethylguanidino)-2-oxopentanoate + L-2-aminopentanoate. It catalyses the reaction 2-oxohexanoate + N(omega),N(omega)-dimethyl-L-arginine = L-2-aminohexanoate + 5-(3,3-dimethylguanidino)-2-oxopentanoate. Functionally, multifunctional aminotransferase with a broad substrate specificity. Catalyzes the conversion of glyoxylate to glycine using alanine as the amino donor. Catalyzes metabolism of not L- but the D-isomer of D-beta-aminoisobutyric acid to generate 2-methyl-3-oxopropanoate and alanine. Catalyzes the transfer of the amino group from beta-alanine to pyruvate to yield L-alanine and 3-oxopropanoate. Can metabolize NG-monomethyl-L-arginine (NMMA), asymmetric NG,NG-dimethyl-L-arginine (ADMA) and symmetric NG,N'G-dimethyl-L-arginine (SDMA). ADMA is a potent inhibitor of nitric-oxide (NO) synthase, and this activity provides mechanism through which the kidney regulates blood pressure. This is Alanine--glyoxylate aminotransferase 2, mitochondrial (AGXT2) from Homo sapiens (Human).